The sequence spans 213 residues: Protein brother (213 aa).

The tract at residues 189–213 is disordered; that stretch reads HTPQTPPEDHHHRGGPGLPRGPMGW. Gly residues predominate over residues 203-213; sequence GPGLPRGPMGW.

This sequence belongs to the CBF-beta family.

It localises to the nucleus. Functionally, regulates the DNA-binding properties of Runt. This Drosophila melanogaster (Fruit fly) protein is Protein brother (Bro).